The chain runs to 357 residues: Guanine nucleotide-binding protein alpha-1 subunit (357 aa).

The N-myristoyl glycine moiety is linked to residue glycine 2. Residue cysteine 4 is the site of S-palmitoyl cysteine attachment. Positions 32–357 constitute a G-alpha domain; the sequence is NIIKLLLLGA…STKLKGCGLY (326 aa). Positions 35-48 are G1 motif; that stretch reads KLLLLGAGESGKST. GTP-binding residues include glutamate 43, serine 44, glycine 45, lysine 46, serine 47, threonine 48, aspartate 151, leucine 176, threonine 182, glycine 204, asparagine 270, lysine 271, aspartate 273, and alanine 329. A Mg(2+)-binding site is contributed by serine 47. The interval 174–182 is G2 motif; that stretch reads DILHTRVPT. Mg(2+) is bound at residue threonine 182. Residues 197–206 form a G3 motif region; that stretch reads FRVFDVGGQR. The tract at residues 266–273 is G4 motif; that stretch reads ILFLNKID. Residues 327-332 form a G5 motif region; that stretch reads TCATDT.

Belongs to the G-alpha family. G proteins are composed of 3 units; alpha, beta and gamma. The alpha chain contains the guanine nucleotide binding site. Requires Mg(2+) as cofactor.

In terms of biological role, guanine nucleotide-binding proteins (G proteins) are involved as modulators or transducers in various transmembrane signaling systems. The sequence is that of Guanine nucleotide-binding protein alpha-1 subunit (gpa-1) from Caenorhabditis elegans.